A 538-amino-acid polypeptide reads, in one-letter code: Putative cysteine ligase BshC (538 aa).

The stretch at 460 to 484 (KINEQIELLERMLKRNVEKKHEVEL) forms a coiled coil.

Belongs to the BshC family.

Functionally, involved in bacillithiol (BSH) biosynthesis. May catalyze the last step of the pathway, the addition of cysteine to glucosamine malate (GlcN-Mal) to generate BSH. This is Putative cysteine ligase BshC from Bacillus thuringiensis subsp. konkukian (strain 97-27).